The chain runs to 165 residues: 6,7-dimethyl-8-ribityllumazine synthase (165 aa).

Residues Phe24, Ala62–Glu64, and Ala86–Ile88 contribute to the 5-amino-6-(D-ribitylamino)uracil site. Asp91–Thr92 provides a ligand contact to (2S)-2-hydroxy-3-oxobutyl phosphate. The active-site Proton donor is the His94. 5-amino-6-(D-ribitylamino)uracil is bound at residue Phe119. A (2S)-2-hydroxy-3-oxobutyl phosphate-binding site is contributed by Arg133.

The protein belongs to the DMRL synthase family.

It catalyses the reaction (2S)-2-hydroxy-3-oxobutyl phosphate + 5-amino-6-(D-ribitylamino)uracil = 6,7-dimethyl-8-(1-D-ribityl)lumazine + phosphate + 2 H2O + H(+). Its pathway is cofactor biosynthesis; riboflavin biosynthesis; riboflavin from 2-hydroxy-3-oxobutyl phosphate and 5-amino-6-(D-ribitylamino)uracil: step 1/2. Functionally, catalyzes the formation of 6,7-dimethyl-8-ribityllumazine by condensation of 5-amino-6-(D-ribitylamino)uracil with 3,4-dihydroxy-2-butanone 4-phosphate. This is the penultimate step in the biosynthesis of riboflavin. In Prochlorococcus marinus (strain MIT 9303), this protein is 6,7-dimethyl-8-ribityllumazine synthase.